We begin with the raw amino-acid sequence, 97 residues long: Large ribosomal subunit protein eL21 (97 aa).

Belongs to the eukaryotic ribosomal protein eL21 family.

The protein is Large ribosomal subunit protein eL21 (rpl21e) of Archaeoglobus fulgidus (strain ATCC 49558 / DSM 4304 / JCM 9628 / NBRC 100126 / VC-16).